We begin with the raw amino-acid sequence, 428 residues long: Monocarboxylate transporter 13 (428 aa).

The Cytoplasmic portion of the chain corresponds to 1–10 (MVHRTEPPDG). The next 12 helical transmembrane spans lie at 11-31 (GWGW…FGVL), 52-72 (VSWI…IGSA), 81-101 (PVVM…SFAT), 106-126 (LYLS…TPTL), 139-159 (LAMG…APLF), 172-192 (LLLV…LRPL), 221-241 (VALT…VAHL), 244-264 (LGWD…SDLV), 283-303 (LLML…VAQA), 309-329 (VLAV…FSVI), 338-358 (IYCG…LGAP), and 374-394 (FVVA…LPHF). Residues 395–428 (FSCISLSTSRPQDLVIEAPDTKIPLPKEEGLGEN) lie on the Cytoplasmic side of the membrane.

Belongs to the major facilitator superfamily. Monocarboxylate porter (TC 2.A.1.13) family.

The protein resides in the golgi apparatus membrane. The protein localises to the cell membrane. Functionally, proton-linked monocarboxylate transporter. May catalyze the transport of monocarboxylates across the plasma membrane. The chain is Monocarboxylate transporter 13 (Slc16a13) from Rattus norvegicus (Rat).